The following is an 837-amino-acid chain: MFSINARTKVPIWVPFIARKGFSMSTRQLAEPKLNQVSSLNTRNIGIIAHIDAGKTTTTERMLFYSGKTTTMGDVDQGDTVTDYLPSERSRGITIQSAAITIPWNNNKINIIDTPGHADFTFEVIRSLRVLDGCVTILDAVAGVEAQTEKVWKQAQALKIPRIAFVNKMDRPGAGFSRTVKEVVQKLQTKVVLCNIPYFEMSKDDAVFVGVIDILHNKILKWNIDEDPNGRDITVIDLQEAKESHQEAYMEALKCRESMVETLGGIEETVVDAFLECDEDYMKIPSSILKSAIRKACISNQVTPVFCGSAFRKIAVQPLLDGVVDYLPSPLQTPVPEITASTSKVSKKQKQKKNSKVSSVPIEMNPKKGLIVNKNPQLTVALAFKVMTHATRGVMTFFRVYSGSLTSNTTVVNTRTGKKLHLNKVLLMHGDTPEPVSQISSGNIGVITGTENDVITGDTLVSHGPVKRNFTDLETSIKLLPIEIPPPLFNSSIEPLTAGDARYMNECINTLIREDPSLNVNVDEELGQTILSGMGELHLEIVRDRLINDMKAKIRLRNVAVSFKETVSKPSLEVVKASKNDGLVKVEVSLEAIDGPAEESTHADENGSVLLETDNNVVKLPPEAAASHINESLSERRWKSEHSLEELNDIILQGITTGLQLGGPILGLPLHSVVVRVIHWDFPVEGKEVSASMLLDASRQVVREALSKLPESSFCILEPIMSTRVYVDSGSMGEVVHDLSHRCSAHITSIEDESENMDSNAWANEEAENLYLPQDYTMKSGKNAVNFTNKKVVVAETPLRDMVGYLSKLRSITQGRGVFDMTYLGMRRAIRPVLLDS.

Residues M1–L29 constitute a mitochondrion transit peptide. Residues L40–L331 form the tr-type G domain. Residues A49 to T56, D113 to H117, and N167 to D170 each bind GTP. Residues I338–S359 are disordered. A compositionally biased stretch (basic residues) spans V345–S355.

It belongs to the TRAFAC class translation factor GTPase superfamily. Classic translation factor GTPase family. EF-G/EF-2 subfamily.

Its subcellular location is the mitochondrion. In terms of biological role, mitochondrial GTPase that mediates the disassembly of ribosomes from messenger RNA at the termination of mitochondrial protein biosynthesis. Not involved in the GTP-dependent ribosomal translocation step during translation elongation. In Meyerozyma guilliermondii (strain ATCC 6260 / CBS 566 / DSM 6381 / JCM 1539 / NBRC 10279 / NRRL Y-324) (Yeast), this protein is Ribosome-releasing factor 2, mitochondrial.